An 89-amino-acid polypeptide reads, in one-letter code: HssA/B-like protein 16 (89 aa).

It belongs to the hssA/B family.

The sequence is that of HssA/B-like protein 16 (hssl16) from Dictyostelium discoideum (Social amoeba).